Reading from the N-terminus, the 152-residue chain is Large ribosomal subunit protein uL30 (152 aa).

It belongs to the universal ribosomal protein uL30 family. In terms of assembly, part of the 50S ribosomal subunit.

The chain is Large ribosomal subunit protein uL30 from Methanosphaera stadtmanae (strain ATCC 43021 / DSM 3091 / JCM 11832 / MCB-3).